Here is a 101-residue protein sequence, read N- to C-terminus: Small ribosomal subunit protein uS14 (101 aa).

The protein belongs to the universal ribosomal protein uS14 family. Part of the 30S ribosomal subunit. Contacts proteins S3 and S10.

Its function is as follows. Binds 16S rRNA, required for the assembly of 30S particles and may also be responsible for determining the conformation of the 16S rRNA at the A site. In Shewanella oneidensis (strain ATCC 700550 / JCM 31522 / CIP 106686 / LMG 19005 / NCIMB 14063 / MR-1), this protein is Small ribosomal subunit protein uS14.